A 158-amino-acid polypeptide reads, in one-letter code: SsrA-binding protein (158 aa).

This sequence belongs to the SmpB family.

It is found in the cytoplasm. Required for rescue of stalled ribosomes mediated by trans-translation. Binds to transfer-messenger RNA (tmRNA), required for stable association of tmRNA with ribosomes. tmRNA and SmpB together mimic tRNA shape, replacing the anticodon stem-loop with SmpB. tmRNA is encoded by the ssrA gene; the 2 termini fold to resemble tRNA(Ala) and it encodes a 'tag peptide', a short internal open reading frame. During trans-translation Ala-aminoacylated tmRNA acts like a tRNA, entering the A-site of stalled ribosomes, displacing the stalled mRNA. The ribosome then switches to translate the ORF on the tmRNA; the nascent peptide is terminated with the 'tag peptide' encoded by the tmRNA and targeted for degradation. The ribosome is freed to recommence translation, which seems to be the essential function of trans-translation. The polypeptide is SsrA-binding protein (Chloroflexus aggregans (strain MD-66 / DSM 9485)).